We begin with the raw amino-acid sequence, 471 residues long: Alpha-galactosidase (471 aa).

Positions 1–18 (MFLLYLFTSFAAVSGVLG) are cleaved as a signal peptide. The cysteines at positions 42 and 74 are disulfide-linked. The substrate site is built by Asp72 and Asp73. An N-linked (GlcNAc...) asparagine glycan is attached at Asn82. A disulfide bridge connects residues Cys121 and Cys151. Residue Lys147 participates in substrate binding. The active-site Nucleophile is Asp149. Asn175 carries N-linked (GlcNAc...) asparagine glycosylation. Substrate is bound at residue Arg205. Asp209 (proton donor) is an active-site residue. 2 disulfide bridges follow: Cys221–Cys237 and Cys223–Cys230. Substrate is bound at residue Gln251. Residues Asn270, Asn403, Asn412, Asn417, Asn422, Asn435, and Asn454 are each glycosylated (N-linked (GlcNAc...) asparagine).

This sequence belongs to the glycosyl hydrolase 27 family. As to quaternary structure, homotetramer.

The protein localises to the secreted. It carries out the reaction Hydrolysis of terminal, non-reducing alpha-D-galactose residues in alpha-D-galactosides, including galactose oligosaccharides, galactomannans and galactolipids.. The polypeptide is Alpha-galactosidase (MEL) (Saccharomyces pastorianus (strain ATCC 76529 / Carlsberg bottom yeast no.1 / CBS 1513 / CLIB 176 / NBRC 1167 / NCYC 396 / NRRL Y-12693) (Saaz-type lager yeast)).